We begin with the raw amino-acid sequence, 201 residues long: MELVLKDAQSALTVSETTFGRDFNEALVHQVVVAYAAGARQGTRAQKTRAEVTGSGKKPWRQKGTGRARSGSIKSPIWRSGGVTFAAKPQDHSQKVNKKMYRGALKSILSELVRQDRLIVVEKFSVEAPKTKLLAQKLKEMALEDVLIITGELDENLFLAARNLYKVDVRDAAAIDPVSLIAFDKVVMTADAVKQVEEMLA.

A disordered region spans residues Arg44–Gly71.

The protein belongs to the universal ribosomal protein uL4 family. Part of the 50S ribosomal subunit.

Its function is as follows. One of the primary rRNA binding proteins, this protein initially binds near the 5'-end of the 23S rRNA. It is important during the early stages of 50S assembly. It makes multiple contacts with different domains of the 23S rRNA in the assembled 50S subunit and ribosome. In terms of biological role, forms part of the polypeptide exit tunnel. In Pectobacterium carotovorum subsp. carotovorum (strain PC1), this protein is Large ribosomal subunit protein uL4.